The following is a 606-amino-acid chain: Cryptochrome-1 (606 aa).

Positions 3-132 (VNAVHWFRKG…EVIVRISHTL (130 aa)) constitute a Photolyase/cryptochrome alpha/beta domain. A Glycyl lysine isopeptide (Lys-Gly) (interchain with G-Cter in ubiquitin) cross-link involves residue Lys11. Positions 50 to 54 (NRWRF) match the LIR 1 motif. Residue Ser71 is modified to Phosphoserine; by AMPK. The LIR 2 motif lies at 82 to 87 (DVFPRL). Lys107 is covalently cross-linked (Glycyl lysine isopeptide (Lys-Gly) (interchain with G-Cter in ubiquitin)). An LIR 3 motif is present at residues 151–156 (KRFQTL). Lys159 is covalently cross-linked (Glycyl lysine isopeptide (Lys-Gly) (interchain with G-Cter in ubiquitin)). Phosphoserine; by MAPK is present on Ser247. Ser252 lines the FAD pocket. 2 short sequence motifs (LIR) span residues 255–260 (LRFGCL) and 271–276 (DLYKKV). Position 280 is a phosphoserine; by AMPK (Ser280). The short motif at 285–290 (SLYGQL) is the LIR 6 element. An FAD-binding site is contributed by Gln289. Lys329 is covalently cross-linked (Glycyl lysine isopeptide (Lys-Gly) (interchain with G-Cter in ubiquitin)). Positions 335–339 (TGFPW) match the LIR 7 motif. An FAD-binding site is contributed by His355. Positions 371–470 (WISWEEGMKV…LIGVNYPKPM (100 aa)) are required for inhibition of CLOCK-BMAL1-mediated transcription. Residues 379–384 (KVFEEL) carry the LIR 8 motif. 387-389 (DAD) contributes to the FAD binding site. 3 short sequence motifs (LIR) span residues 395–400 (GSWMWL), 411–416 (HCYCPV), and 430–435 (RRYLPV). The segment at 471–493 (VNHAEASRLNIERMKQIYQQLSR) is interaction with TIMELESS. Lys485 participates in a covalent cross-link: Glycyl lysine isopeptide (Lys-Gly) (interchain with G-Cter in ubiquitin). 2 short sequence motifs (LIR) span residues 486 to 491 (QIYQQL) and 492 to 497 (SRYRGL). Positions 559–606 (YAHGDSQQTHSLKQGRSSAGTGLSSGKRPSQEEDAQSVGPKVQRQSSN) are disordered. Residues 563-586 (DSQQTHSLKQGRSSAGTGLSSGKR) are compositionally biased toward polar residues. Residue Lys585 forms a Glycyl lysine isopeptide (Lys-Gly) (interchain with G-Cter in ubiquitin) linkage. Ser588 is modified (phosphoserine).

It belongs to the DNA photolyase class-1 family. As to quaternary structure, component of the circadian core oscillator, which includes the CRY proteins, CLOCK or NPAS2, BMAL1 or BMAL2, CSNK1D and/or CSNK1E, TIMELESS, and the PER proteins. Interacts directly with TIMELESS. Interacts directly with PER1 and PER2; interaction with PER2 inhibits its ubiquitination and vice versa. Interacts with PER3. Interacts with FBXL21. Interacts with FBXL3. Interacts with PPP5C (via TPR repeats). Interacts with CLOCK-BMAL1 independently of PER2 and DNA. Interacts with HDAC1, HDAC2 and SIN3B. Interacts with nuclear receptors AR, NR1D1, NR3C1/GR, RORA and RORC; the interaction with at least NR3C1/GR is ligand dependent. Interacts with PRKDC. Interacts with the G protein subunit alpha GNAS; the interaction may block GPCR-mediated regulation of cAMP concentrations. Interacts with PRMT5. Interacts with EZH2. Interacts with MYBBP1A, DOCK7, HNRNPU, RPL7A, RPL8 and RPS3. Interacts with MAP1LC3B. Interacts with CLOCK. Interacts with BMAL1. Interacts weakly with HDAC3; this interaction is enhanced in the presence of FBXL3. Interacts with TRIM28, KCTD5 and DDB1. Interacts with DTL. Interacts with DDB1-CUL4A complex. Interacts with FOXO1. Interacts with PSMD2 in a KDM8-dependent manner. Interacts with KDM8 in a FBXL3-dependent manner. Interacts with PPARA. Interacts with PPARG in a ligand-dependent manner. Interacts with PPARD (via domain NR LBD) in a ligand-dependent manner. Interacts with NR1I2 (via domain NR LBD) in a ligand-dependent manner. Interacts with NR1I3, VDR and HNF4A. It depends on FAD as a cofactor. Requires (6R)-5,10-methylene-5,6,7,8-tetrahydrofolate as cofactor. Post-translationally, phosphorylation on Ser-247 by MAPK is important for the inhibition of CLOCK-BMAL1-mediated transcriptional activity. Phosphorylation by CSNK1E requires interaction with PER1 or PER2. Phosphorylation at Ser-71 and Ser-280 by AMPK decreases protein stability. Phosphorylation at Ser-588 exhibits a robust circadian rhythm with a peak at CT8, increases protein stability, prevents SCF(FBXL3)-mediated degradation and is antagonized by interaction with PRKDC. Ubiquitinated by the SCF(FBXL3) and SCF(FBXL21) complexes, regulating the balance between degradation and stabilization. The SCF(FBXL3) complex is mainly nuclear and mediates ubiquitination and subsequent degradation of CRY1. In contrast, cytoplasmic SCF(FBXL21) complex-mediated ubiquitination leads to stabilize CRY1 and counteract the activity of the SCF(FBXL3) complex. The SCF(FBXL3) and SCF(FBXL21) complexes probably mediate ubiquitination at different Lys residues. Ubiquitination at Lys-11 and Lys-107 are specifically ubiquitinated by the SCF(FBXL21) complex but not by the SCF(FBXL3) complex. Ubiquitination may be inhibited by PER2. Deubiquitinated by USP7. In terms of processing, undergoes autophagy-mediated degradation in the liver in a time-dependent manner. Autophagic degradation of CRY1 (an inhibitor of gluconeogenesis) occurs during periods of reduced feeding allowing induction of gluconeogenesis and maintenance of blood glucose levels. As to expression, expressed in cones, amacrine cells, and retinal ganglion cells of the retina (at protein level). Expressed in all tissues examined including heart, brain, spleen, lung, liver, skeletal muscle, kidney and testis. Higher levels in brain, liver and testis. In the retina, highly expressed in the ganglion cell layer (GCL) and in the inner nuclear layer (INL). Evenly distributed in central and peripheral retina. In the brain, highly expressed in the suprachiasmatic nucleus (SCN). High levels in cerebral cortical layers particularly in the pyramidial cell layer of the hippocampus, the granular cell layer of the dentate gyrus (DG) and the pyramidal cell layer of the piriform cortex (PFC).

It is found in the cytoplasm. The protein localises to the nucleus. Its activity is regulated as follows. KL001 (N-[3-(9H-carbazol-9-yl)-2-hydroxypropyl]-N-(2-furanylmethyl)-methanesulfonamide) binds to CRY1 and stabilizes it by inhibiting FBXL3- and ubiquitin-dependent degradation of CRY1 resulting in lengthening of the circadian periods. KL001-mediated CRY1 stabilization can inhibit glucagon-induced gluconeogenesis in primary hepatocytes. Its function is as follows. Transcriptional repressor which forms a core component of the circadian clock. The circadian clock, an internal time-keeping system, regulates various physiological processes through the generation of approximately 24 hour circadian rhythms in gene expression, which are translated into rhythms in metabolism and behavior. It is derived from the Latin roots 'circa' (about) and 'diem' (day) and acts as an important regulator of a wide array of physiological functions including metabolism, sleep, body temperature, blood pressure, endocrine, immune, cardiovascular, and renal function. Consists of two major components: the central clock, residing in the suprachiasmatic nucleus (SCN) of the brain, and the peripheral clocks that are present in nearly every tissue and organ system. Both the central and peripheral clocks can be reset by environmental cues, also known as Zeitgebers (German for 'timegivers'). The predominant Zeitgeber for the central clock is light, which is sensed by retina and signals directly to the SCN. The central clock entrains the peripheral clocks through neuronal and hormonal signals, body temperature and feeding-related cues, aligning all clocks with the external light/dark cycle. Circadian rhythms allow an organism to achieve temporal homeostasis with its environment at the molecular level by regulating gene expression to create a peak of protein expression once every 24 hours to control when a particular physiological process is most active with respect to the solar day. Transcription and translation of core clock components (CLOCK, NPAS2, BMAL1, BMAL2, PER1, PER2, PER3, CRY1 and CRY2) plays a critical role in rhythm generation, whereas delays imposed by post-translational modifications (PTMs) are important for determining the period (tau) of the rhythms (tau refers to the period of a rhythm and is the length, in time, of one complete cycle). A diurnal rhythm is synchronized with the day/night cycle, while the ultradian and infradian rhythms have a period shorter and longer than 24 hours, respectively. Disruptions in the circadian rhythms contribute to the pathology of cardiovascular diseases, cancer, metabolic syndromes and aging. A transcription/translation feedback loop (TTFL) forms the core of the molecular circadian clock mechanism. Transcription factors, CLOCK or NPAS2 and BMAL1 or BMAL2, form the positive limb of the feedback loop, act in the form of a heterodimer and activate the transcription of core clock genes and clock-controlled genes (involved in key metabolic processes), harboring E-box elements (5'-CACGTG-3') within their promoters. The core clock genes: PER1/2/3 and CRY1/2 which are transcriptional repressors form the negative limb of the feedback loop and interact with the CLOCK|NPAS2-BMAL1|BMAL2 heterodimer inhibiting its activity and thereby negatively regulating their own expression. This heterodimer also activates nuclear receptors NR1D1/2 and RORA/B/G, which form a second feedback loop and which activate and repress BMAL1 transcription, respectively. CRY1 and CRY2 have redundant functions but also differential and selective contributions at least in defining the pace of the SCN circadian clock and its circadian transcriptional outputs. More potent transcriptional repressor in cerebellum and liver than CRY2, though more effective in lengthening the period of the SCN oscillator. On its side, CRY2 seems to play a critical role in tuning SCN circadian period by opposing the action of CRY1. With CRY2, is dispensable for circadian rhythm generation but necessary for the development of intercellular networks for rhythm synchrony. Capable of translocating circadian clock core proteins such as PER proteins to the nucleus. Interacts with CLOCK-BMAL1 independently of PER proteins and is found at CLOCK-BMAL1-bound sites, suggesting that CRY may act as a molecular gatekeeper to maintain CLOCK-BMAL1 in a poised and repressed state until the proper time for transcriptional activation. Represses the CLOCK-BMAL1 induced transcription of BHLHE40/DEC1, ATF4, MTA1, KLF10 and NAMPT. May repress circadian target genes expression in collaboration with HDAC1 and HDAC2 through histone deacetylation. Mediates the clock-control activation of ATR and modulates ATR-mediated DNA damage checkpoint. In liver, mediates circadian regulation of cAMP signaling and gluconeogenesis by binding to membrane-coupled G proteins and blocking glucagon-mediated increases in intracellular cAMP concentrations and CREB1 phosphorylation. Inhibits hepatic gluconeogenesis by decreasing nuclear FOXO1 levels that down-regulates gluconeogenic gene expression. Besides its role in the maintenance of the circadian clock, is also involved in the regulation of other processes. Represses glucocorticoid receptor NR3C1/GR-induced transcriptional activity by binding to glucocorticoid response elements (GREs). Plays a key role in glucose and lipid metabolism modulation, in part, through the transcriptional regulation of genes involved in these pathways, such as LEP or ACSL4. Represses PPARD and its target genes in the skeletal muscle and limits exercise capacity. Plays an essential role in the generation of circadian rhythms in the retina. Represses the transcriptional activity of NR1I2. This Mus musculus (Mouse) protein is Cryptochrome-1 (Cry1).